A 425-amino-acid polypeptide reads, in one-letter code: Glutamyl-tRNA reductase (425 aa).

Residues 49–52, serine 109, 114–116, and glutamine 120 each bind substrate; these read TCNR and EGQ. Cysteine 50 acts as the Nucleophile in catalysis. 189–194 is a binding site for NADP(+); sequence GAGETG.

It belongs to the glutamyl-tRNA reductase family. Homodimer.

The enzyme catalyses (S)-4-amino-5-oxopentanoate + tRNA(Glu) + NADP(+) = L-glutamyl-tRNA(Glu) + NADPH + H(+). The protein operates within porphyrin-containing compound metabolism; protoporphyrin-IX biosynthesis; 5-aminolevulinate from L-glutamyl-tRNA(Glu): step 1/2. Its pathway is porphyrin-containing compound metabolism; chlorophyll biosynthesis. Catalyzes the NADPH-dependent reduction of glutamyl-tRNA(Glu) to glutamate 1-semialdehyde (GSA). The sequence is that of Glutamyl-tRNA reductase from Chlorobium phaeobacteroides (strain DSM 266 / SMG 266 / 2430).